Reading from the N-terminus, the 158-residue chain is DNA-binding transcriptional repressor RacR (158 aa).

In terms of assembly, homooctamer.

Transcriptional regulator that represses the expression of ydaS and ydaT under normal physiological conditions. It binds to its own upstream sequence and represses the adjacent and divergently coded ydaS-ydaT operon. RacR-mediated down-regulation of ydaS and ydaT may be critical for cell survival. RacR ensures that the prophage DNA is maintained in the genome. When the expression of the racR gene is reduced, the prophage Rac is excised from the genome, possibly to counteract the lethal toxicity of YdaT. In Escherichia coli (strain K12), this protein is DNA-binding transcriptional repressor RacR (racR).